A 457-amino-acid polypeptide reads, in one-letter code: MSQLNPKVGFVSLGCPKALVDSERILTQLRVEGYDIVPSYDAADVVVVNTCGFIDSAVTESLDAIGEAMNANGKVIVTGCLGKRPEQIREAYPQVLAVSGPQDYQSVMEAVHAALPPRHDPFVDLVPDYGIKLTPRHYAYLKISEGCNHRCSFCIIPSMRGDLASRPVDEVLREAERLVRGGVKELLVVSQDTSAYGVDLKYAERPWRDRMYQTRMKALCEGLSELGVWTRLHYVYPYPHVDDVIPLMAEGKLLPYLDIPFQHASPRILKLMKRPGAVEKTLERVQRWKAMCPEITVRSTFIVGFPGETDAEFEALLEFLDQAQLDRVGAFAYSPVEGASANALPDPVPEELKQERLARFMARQAEISAARLEAKIGSVQQCLVDLIEDDIAVARSRADAPEIDGLVHIQNGGELKLKVGDLVDVEITDSDEHDLFGDALPSDPAAQPPRALNLQMV.

The MTTase N-terminal domain occupies 6-116; that stretch reads PKVGFVSLGC…VMEAVHAALP (111 aa). [4Fe-4S] cluster contacts are provided by cysteine 15, cysteine 51, cysteine 80, cysteine 147, cysteine 151, and cysteine 154. The Radical SAM core domain maps to 133-370; it reads LTPRHYAYLK…MARQAEISAA (238 aa). Residues 373-441 enclose the TRAM domain; the sequence is EAKIGSVQQC…EHDLFGDALP (69 aa).

The protein belongs to the methylthiotransferase family. RimO subfamily. [4Fe-4S] cluster serves as cofactor.

It is found in the cytoplasm. The enzyme catalyses L-aspartate(89)-[ribosomal protein uS12]-hydrogen + (sulfur carrier)-SH + AH2 + 2 S-adenosyl-L-methionine = 3-methylsulfanyl-L-aspartate(89)-[ribosomal protein uS12]-hydrogen + (sulfur carrier)-H + 5'-deoxyadenosine + L-methionine + A + S-adenosyl-L-homocysteine + 2 H(+). Its function is as follows. Catalyzes the methylthiolation of an aspartic acid residue of ribosomal protein uS12. This is Ribosomal protein uS12 methylthiotransferase RimO from Xanthomonas campestris pv. campestris (strain 8004).